The sequence spans 240 residues: tRNA (guanine-N(7)-)-methyltransferase (240 aa).

The interval Met1–Arg20 is disordered. Residues Glu70, Glu95, Asp122, and Asp145 each coordinate S-adenosyl-L-methionine. The active site involves Asp145. Substrate-binding positions include Lys149, Asp181, and Thr218–Glu221.

Belongs to the class I-like SAM-binding methyltransferase superfamily. TrmB family.

The catalysed reaction is guanosine(46) in tRNA + S-adenosyl-L-methionine = N(7)-methylguanosine(46) in tRNA + S-adenosyl-L-homocysteine. It functions in the pathway tRNA modification; N(7)-methylguanine-tRNA biosynthesis. Functionally, catalyzes the formation of N(7)-methylguanine at position 46 (m7G46) in tRNA. The sequence is that of tRNA (guanine-N(7)-)-methyltransferase from Pseudomonas putida (strain ATCC 47054 / DSM 6125 / CFBP 8728 / NCIMB 11950 / KT2440).